Reading from the N-terminus, the 227-residue chain is Small ribosomal subunit protein uS3 (227 aa).

The region spanning 38 to 106 is the KH type-2 domain; sequence LRKYLREKLA…EVHLNIVEIR (69 aa).

Belongs to the universal ribosomal protein uS3 family. Part of the 30S ribosomal subunit. Forms a tight complex with proteins S10 and S14.

In terms of biological role, binds the lower part of the 30S subunit head. Binds mRNA in the 70S ribosome, positioning it for translation. This chain is Small ribosomal subunit protein uS3, found in Paramagnetospirillum magneticum (strain ATCC 700264 / AMB-1) (Magnetospirillum magneticum).